A 264-amino-acid chain; its full sequence is 3-methyl-2-oxobutanoate hydroxymethyltransferase (264 aa).

Positions 45 and 84 each coordinate Mg(2+). 3-methyl-2-oxobutanoate is bound by residues 45 to 46 (DS), D84, and K112. A Mg(2+)-binding site is contributed by E114. E181 serves as the catalytic Proton acceptor.

Belongs to the PanB family. Homodecamer; pentamer of dimers. It depends on Mg(2+) as a cofactor.

It localises to the cytoplasm. It catalyses the reaction 3-methyl-2-oxobutanoate + (6R)-5,10-methylene-5,6,7,8-tetrahydrofolate + H2O = 2-dehydropantoate + (6S)-5,6,7,8-tetrahydrofolate. It functions in the pathway cofactor biosynthesis; (R)-pantothenate biosynthesis; (R)-pantoate from 3-methyl-2-oxobutanoate: step 1/2. Functionally, catalyzes the reversible reaction in which hydroxymethyl group from 5,10-methylenetetrahydrofolate is transferred onto alpha-ketoisovalerate to form ketopantoate. In Shewanella frigidimarina (strain NCIMB 400), this protein is 3-methyl-2-oxobutanoate hydroxymethyltransferase.